A 332-amino-acid chain; its full sequence is MEAIINKLYEQQSLTQEESQQLFDIIIRGELDPILMASALTALKIKGETPDEIAGAAKALLANANPFPRPDYDFADIVGTGGDGHNTINISTTAAFVAAACGLKVAKHGNRSVSSKSGSSDLLDSFGINLAMSAEDTRKAVDDIGVAFLFAPQYHGGVRHAMPVRQTMKTRTIFNILGPLINPARPNIELMGVYSEELVRPIAETMLQMGMKRAAVVHGSGLDEVAIHGTTTVAEIKDGKITEYTLTPEDFGLESHPLEAIKGGDPEENKAIITNILTGKGTDAQLGAVAVNVALLMRLFGHEDLKANTQQAIEAMNSGKAYQLVQQLAAHA.

5-phospho-alpha-D-ribose 1-diphosphate-binding positions include Gly79, 82 to 83 (GD), Thr87, 89 to 92 (NIST), 107 to 115 (KHGNRSVSS), and Ser119. Gly79 contributes to the anthranilate binding site. Ser91 provides a ligand contact to Mg(2+). An anthranilate-binding site is contributed by Asn110. Arg165 serves as a coordination point for anthranilate. Mg(2+) is bound by residues Asp223 and Glu224.

It belongs to the anthranilate phosphoribosyltransferase family. As to quaternary structure, homodimer. Mg(2+) is required as a cofactor.

It carries out the reaction N-(5-phospho-beta-D-ribosyl)anthranilate + diphosphate = 5-phospho-alpha-D-ribose 1-diphosphate + anthranilate. The protein operates within amino-acid biosynthesis; L-tryptophan biosynthesis; L-tryptophan from chorismate: step 2/5. Functionally, catalyzes the transfer of the phosphoribosyl group of 5-phosphorylribose-1-pyrophosphate (PRPP) to anthranilate to yield N-(5'-phosphoribosyl)-anthranilate (PRA). The chain is Anthranilate phosphoribosyltransferase from Vibrio parahaemolyticus serotype O3:K6 (strain RIMD 2210633).